Reading from the N-terminus, the 384-residue chain is GDSL esterase/lipase ENOD8 (384 aa).

A signal peptide spans 1 to 31; sequence MKFMAKIELSRHIPLVTLIVLVLCITPPIFA. The active-site Nucleophile is the Ser-46. Asn-105, Asn-191, Asn-198, Asn-276, and Asn-330 each carry an N-linked (GlcNAc...) asparagine glycan. Residues Asp-349 and His-352 contribute to the active site.

The protein belongs to the 'GDSL' lipolytic enzyme family. In terms of tissue distribution, expressed in root nodules (at protein level).

The protein localises to the symbiosome. Has lipase and esterase activities. Probably involved in root nodule physiology. This chain is GDSL esterase/lipase ENOD8, found in Medicago truncatula (Barrel medic).